The chain runs to 187 residues: Transmembrane protein 17A (187 aa).

The next 4 membrane-spanning stretches (helical) occupy residues 49 to 69 (IFLYFNAFYFPFWWVCYVIML), 82 to 102 (FILVVLLILMSVIEVIRLYLG), 114 to 134 (LAGFCLLSILLQLPLLLFLLC), and 146 to 166 (AVHGILTAFLLIQIPISIFAL).

This sequence belongs to the TMEM17 family. As to quaternary structure, part of the tectonic-like complex (also named B9 complex).

The protein localises to the cell projection. The protein resides in the cilium membrane. Its function is as follows. Transmembrane component of the tectonic-like complex, a complex localized at the transition zone of primary cilia and acting as a barrier that prevents diffusion of transmembrane proteins between the cilia and plasma membranes. Required for ciliogenesis and sonic hedgehog/SHH signaling. This chain is Transmembrane protein 17A (tmem17-a), found in Xenopus tropicalis (Western clawed frog).